Here is a 172-residue protein sequence, read N- to C-terminus: Early nodulin-like protein 17 (172 aa).

The N-terminal stretch at 1 to 26 (MARFTVLITAVVLAFLMAAPMPGVTA) is a signal peptide. A Phytocyanin domain is found at 27 to 127 (KKYTVGENKF…GMKLSVKVEK (101 aa)). N-linked (GlcNAc...) asparagine glycans are attached at residues Asn42, Asn73, Asn88, and Asn101. The cysteines at positions 80 and 115 are disulfide-linked. Gly141 is lipidated: GPI-anchor amidated glycine. Residues 142–172 (SVSMVTGLAQFMIPVSLFAFPAMWDVISRMW) constitute a propeptide, removed in mature form.

Belongs to the early nodulin-like (ENODL) family.

Its subcellular location is the cell membrane. Its function is as follows. May act as a carbohydrate transporter. The polypeptide is Early nodulin-like protein 17 (Arabidopsis thaliana (Mouse-ear cress)).